Consider the following 298-residue polypeptide: Anamorsin homolog (298 aa).

The interval 1–143 (MTQLIITHQS…IKAEKPSWKP (143 aa)) is N-terminal SAM-like domain. The linker stretch occupies residues 143-162 (PEEGKVLVDDIDLEGSVPDI). [2Fe-2S] cluster-binding residues include Cys-175, Cys-182, Cys-185, and Cys-187. The fe-S binding site A stretch occupies residues 175–187 (CKSKERACNNCNC). [4Fe-4S] cluster-binding residues include Cys-218, Cys-221, Cys-229, and Cys-232. 2 consecutive short sequence motifs (cx2C motif) follow at residues 218 to 221 (CGNC) and 229 to 232 (CSGC). The fe-S binding site B stretch occupies residues 218–232 (CGNCYLGDAFRCSGC).

It belongs to the anamorsin family. Monomer. [2Fe-2S] cluster is required as a cofactor. It depends on [4Fe-4S] cluster as a cofactor.

Its subcellular location is the cytoplasm. It is found in the mitochondrion intermembrane space. Component of the cytosolic iron-sulfur (Fe-S) protein assembly (CIA) machinery. Required for the maturation of extramitochondrial Fe-S proteins. Part of an electron transfer chain functioning in an early step of cytosolic Fe-S biogenesis, facilitating the de novo assembly of a [4Fe-4S] cluster on the cytosolic Fe-S scaffold complex. Electrons are transferred from NADPH via a FAD- and FMN-containing diflavin oxidoreductase. Together with the diflavin oxidoreductase, also required for the assembly of the diferric tyrosyl radical cofactor of ribonucleotide reductase (RNR), probably by providing electrons for reduction during radical cofactor maturation in the catalytic small subunit. The sequence is that of Anamorsin homolog from Cryptosporidium parvum (strain Iowa II).